The chain runs to 278 residues: Large ribosomal subunit protein uL2 (278 aa).

Disordered regions lie at residues 1-20 (MAIRKYKPTTPGRRGSSVSD), 25-57 (TRSTPEKSLLRPLTKSGGRNAHGRITTRHRGGG), and 224-278 (VVMN…GKKR). Basic residues-rich tracts occupy residues 45 to 57 (AHGRITTRHRGGG) and 269 to 278 (VRRRKTGKKR).

This sequence belongs to the universal ribosomal protein uL2 family. As to quaternary structure, part of the 50S ribosomal subunit. Forms a bridge to the 30S subunit in the 70S ribosome.

Functionally, one of the primary rRNA binding proteins. Required for association of the 30S and 50S subunits to form the 70S ribosome, for tRNA binding and peptide bond formation. It has been suggested to have peptidyltransferase activity; this is somewhat controversial. Makes several contacts with the 16S rRNA in the 70S ribosome. The chain is Large ribosomal subunit protein uL2 from Nocardia farcinica (strain IFM 10152).